Here is a 281-residue protein sequence, read N- to C-terminus: 2,3,4,5-tetrahydropyridine-2,6-dicarboxylate N-succinyltransferase (281 aa).

This sequence belongs to the transferase hexapeptide repeat family.

The protein localises to the cytoplasm. The catalysed reaction is (S)-2,3,4,5-tetrahydrodipicolinate + succinyl-CoA + H2O = (S)-2-succinylamino-6-oxoheptanedioate + CoA. The protein operates within amino-acid biosynthesis; L-lysine biosynthesis via DAP pathway; LL-2,6-diaminopimelate from (S)-tetrahydrodipicolinate (succinylase route): step 1/3. The sequence is that of 2,3,4,5-tetrahydropyridine-2,6-dicarboxylate N-succinyltransferase from Methylobacterium sp. (strain 4-46).